Here is a 70-residue protein sequence, read N- to C-terminus: Ubiquinol-cytochrome c reductase complex assembly factor 5 (70 aa).

Residues Met1 to Arg19 lie on the Mitochondrial matrix side of the membrane. The helical transmembrane segment at Phe20–Ile41 threads the bilayer. Residues Lys42–Glu70 lie on the Mitochondrial intermembrane side of the membrane.

This sequence belongs to the UQCC5 family. Associates with the mitochondrial ribosome. Interacts with UQCC6. Interacts with MT-CYB; interacts with newly synthesizes MT-CYB. Forms a complex, named COMB/coordinator of mitochondrial CYTB biogenesis, composed of UQCC1, UQCC2, UQCC4, UQCC5 and UQCC6; regulates MT-CYB synthesis and promotes its membrane insertion.

The protein resides in the mitochondrion inner membrane. Functionally, required for the assembly and stability of the mitochondrial ubiquinol-cytochrome c reductase complex (complex III (CIII) or cytochrome b-c1 complex), a multisubunit transmembrane complex that is part of the mitochondrial electron transport chain (ETC) which drives oxidative phosphorylation. Mediates early complex III biogenesis. Participates in regulating the levels of electron transport chain proteins, and therefore energy supply, in response to changes in energy demand. Also involved in the first steps of cytochrome c oxidase complex (complex IV) assembly. The protein is Ubiquinol-cytochrome c reductase complex assembly factor 5 of Homo sapiens (Human).